The chain runs to 647 residues: tRNA 5-methylaminomethyl-2-thiouridine biosynthesis bifunctional protein MnmC (647 aa).

The tract at residues Met1–Ser227 is tRNA (mnm(5)s(2)U34)-methyltransferase. An FAD-dependent cmnm(5)s(2)U34 oxidoreductase region spans residues Val256–Lys647.

This sequence in the N-terminal section; belongs to the methyltransferase superfamily. tRNA (mnm(5)s(2)U34)-methyltransferase family. In the C-terminal section; belongs to the DAO family. It depends on FAD as a cofactor.

Its subcellular location is the cytoplasm. The enzyme catalyses 5-aminomethyl-2-thiouridine(34) in tRNA + S-adenosyl-L-methionine = 5-methylaminomethyl-2-thiouridine(34) in tRNA + S-adenosyl-L-homocysteine + H(+). Catalyzes the last two steps in the biosynthesis of 5-methylaminomethyl-2-thiouridine (mnm(5)s(2)U) at the wobble position (U34) in tRNA. Catalyzes the FAD-dependent demodification of cmnm(5)s(2)U34 to nm(5)s(2)U34, followed by the transfer of a methyl group from S-adenosyl-L-methionine to nm(5)s(2)U34, to form mnm(5)s(2)U34. This is tRNA 5-methylaminomethyl-2-thiouridine biosynthesis bifunctional protein MnmC from Leptospira interrogans serogroup Icterohaemorrhagiae serovar copenhageni (strain Fiocruz L1-130).